The sequence spans 193 residues: Xanthine phosphoribosyltransferase (193 aa).

Leu-20 and Thr-27 together coordinate xanthine. A 5-phospho-alpha-D-ribose 1-diphosphate-binding site is contributed by 128–132 (ANGQA). Lys-156 contributes to the xanthine binding site.

This sequence belongs to the purine/pyrimidine phosphoribosyltransferase family. Xpt subfamily. In terms of assembly, homodimer.

Its subcellular location is the cytoplasm. It carries out the reaction XMP + diphosphate = xanthine + 5-phospho-alpha-D-ribose 1-diphosphate. It participates in purine metabolism; XMP biosynthesis via salvage pathway; XMP from xanthine: step 1/1. Converts the preformed base xanthine, a product of nucleic acid breakdown, to xanthosine 5'-monophosphate (XMP), so it can be reused for RNA or DNA synthesis. The polypeptide is Xanthine phosphoribosyltransferase (Streptococcus equi subsp. equi (strain 4047)).